The following is a 391-amino-acid chain: uncharacterized protein (391 aa).

The 96-residue stretch at Val235 to Ser330 folds into the HTH arsR-type domain.

This is an uncharacterized protein from Methanocaldococcus jannaschii (strain ATCC 43067 / DSM 2661 / JAL-1 / JCM 10045 / NBRC 100440) (Methanococcus jannaschii).